Here is a 723-residue protein sequence, read N- to C-terminus: Catalase-peroxidase (723 aa).

Positions 98-226 (WHAAGSYRAA…LAAVQMGLIY (129 aa)) form a cross-link, tryptophyl-tyrosyl-methioninium (Trp-Tyr) (with M-252). H99 serves as the catalytic Proton acceptor. The segment at residues 226-252 (YVNPEGVNGKPDPLKTAAQVRETFARM) is a cross-link (tryptophyl-tyrosyl-methioninium (Tyr-Met) (with W-98)). H267 contributes to the heme b binding site. A disordered region spans residues 267–286 (HTVGKTHGNGRAENLGPSPE).

It belongs to the peroxidase family. Peroxidase/catalase subfamily. As to quaternary structure, homodimer or homotetramer. It depends on heme b as a cofactor. In terms of processing, formation of the three residue Trp-Tyr-Met cross-link is important for the catalase, but not the peroxidase activity of the enzyme.

The enzyme catalyses H2O2 + AH2 = A + 2 H2O. It catalyses the reaction 2 H2O2 = O2 + 2 H2O. Bifunctional enzyme with both catalase and broad-spectrum peroxidase activity. In Thioalkalivibrio sulfidiphilus (strain HL-EbGR7), this protein is Catalase-peroxidase.